Here is a 273-residue protein sequence, read N- to C-terminus: Torsin-1A (273 aa).

The tract at residues 45–205 is interaction with SNAPIN; it reads KPKKPLTLSL…VSVFNNKNSG (161 aa). 56-63 contacts ATP; it reads GWTGTGKN. Residues N97 and N112 are each glycosylated (N-linked (GlcNAc...) asparagine).

This sequence belongs to the ClpA/ClpB family. Torsin subfamily. In terms of assembly, homohexamer. Interacts with TOR1B; the interaction may be specific of neural tissues. Interacts (ATP-bound) with TOR1AIP1 and TOR1AIP2; the interactions induce ATPase activity. Interacts with KLHL14; preferentially when ATP-free. Interacts with KLC1 (via TPR repeats); the interaction associates TOR1A with the kinesin oligomeric complex. Interacts with COPS4; the interaction associates TOR1A with the CSN complex. Interacts with SNAPIN; the interaction is direct and associates SNAPIN with the CSN complex. Interacts with STON2. Interacts (ATP-bound) with SYNE3 (via KASH domain); the interaction is required for SYNE3 nuclear envelope localization. Interacts with VIM; the interaction associates TOR1A with the cytoskeleton. Interacts with PLEC. Interacts (ATP-bound) with SLC6A3; regulates SLC6A3 transport to the plasma membrane. In terms of processing, N-glycosylated.

The protein resides in the endoplasmic reticulum lumen. It is found in the nucleus membrane. The protein localises to the cell projection. Its subcellular location is the growth cone. It localises to the cytoplasmic vesicle membrane. The protein resides in the synapse. It is found in the synaptosome. The protein localises to the cytoplasm. Its subcellular location is the cytoskeleton. The catalysed reaction is ATP + H2O = ADP + phosphate + H(+). In terms of biological role, protein with chaperone functions important for the control of protein folding, processing, stability and localization as well as for the reduction of misfolded protein aggregates. Involved in the regulation of synaptic vesicle recycling, controls STON2 protein stability in collaboration with the COP9 signalosome complex (CSN). In the nucleus, may link the cytoskeleton with the nuclear envelope, this mechanism seems to be crucial for the control of nuclear polarity, cell movement and, specifically in neurons, nuclear envelope integrity. Participates in the cellular trafficking and may regulate the subcellular location of multipass membrane proteins such as the dopamine transporter SLC6A3, leading to the modulation of dopamine neurotransmission. In the endoplasmic reticulum, plays a role in the quality control of protein folding by increasing clearance of misfolded proteins such as SGCE variants or holding them in an intermediate state for proper refolding. May have a redundant function with TOR1B in non-neural tissues. The protein is Torsin-1A (TOR1A) of Cricetus cricetus (Black-bellied hamster).